The following is a 459-amino-acid chain: Sperm-tail PG-rich repeat-containing protein 2 (459 aa).

STPGR repeat units lie at residues 21 to 30 (VGPGSYQVPF), 63 to 73 (PGPGHYNVSEA), 119 to 148 (TLGP…NSSG), 157 to 203 (GPGP…QEKK), 213 to 243 (TPAP…FGQS), 257 to 268 (PGPGFYNVLNNT), 351 to 377 (PAPG…PRSL), 400 to 410 (GPGPAAYNPVL), and 433 to 443 (TPGPATYEISQ).

In Homo sapiens (Human), this protein is Sperm-tail PG-rich repeat-containing protein 2 (STPG2).